Reading from the N-terminus, the 240-residue chain is UDP-2,3-diacylglucosamine hydrolase (240 aa).

5 residues coordinate Mn(2+): D8, H10, D41, N79, and H114. Residue 79–80 participates in substrate binding; it reads NR. The substrate site is built by D122, S160, N164, K167, and H195. H195 and H197 together coordinate Mn(2+).

This sequence belongs to the LpxH family. Mn(2+) serves as cofactor.

The protein resides in the cell inner membrane. The catalysed reaction is UDP-2-N,3-O-bis[(3R)-3-hydroxytetradecanoyl]-alpha-D-glucosamine + H2O = 2-N,3-O-bis[(3R)-3-hydroxytetradecanoyl]-alpha-D-glucosaminyl 1-phosphate + UMP + 2 H(+). It functions in the pathway glycolipid biosynthesis; lipid IV(A) biosynthesis; lipid IV(A) from (3R)-3-hydroxytetradecanoyl-[acyl-carrier-protein] and UDP-N-acetyl-alpha-D-glucosamine: step 4/6. Hydrolyzes the pyrophosphate bond of UDP-2,3-diacylglucosamine to yield 2,3-diacylglucosamine 1-phosphate (lipid X) and UMP by catalyzing the attack of water at the alpha-P atom. Involved in the biosynthesis of lipid A, a phosphorylated glycolipid that anchors the lipopolysaccharide to the outer membrane of the cell. In Photorhabdus laumondii subsp. laumondii (strain DSM 15139 / CIP 105565 / TT01) (Photorhabdus luminescens subsp. laumondii), this protein is UDP-2,3-diacylglucosamine hydrolase.